Reading from the N-terminus, the 29-residue chain is Cyclotide mela-3 (29 aa).

The cyclopeptide (Gly-Asp) cross-link spans 1 to 29 (GKPICGETCFKGKCYTPGCTCSYPICKKD). 3 cysteine pairs are disulfide-bonded: C5-C19, C9-C21, and C14-C26.

In terms of processing, this is a cyclic peptide. Post-translationally, contains 3 disulfide bonds.

Functionally, probably participates in a plant defense mechanism (Potential). Binds to and induces leakage in phospholipd membranes, particularly ones containing 1-palmitoyl-2-oleophosphatidylethanolamine (POPE). In vitro, displays cytotoxicity against cultured cells. Not active against Gram-negative bacterium E.coli ATCC 25922 or Gram-positive bacterium S.aureus ATCC 25923 up to a concentration of 64 uM. The protein is Cyclotide mela-3 of Melicytus latifolius (Norfolk Island mahoe).